A 495-amino-acid polypeptide reads, in one-letter code: Lysine--tRNA ligase (495 aa).

Positions 406 and 413 each coordinate Mg(2+).

Belongs to the class-II aminoacyl-tRNA synthetase family. As to quaternary structure, homodimer. Mg(2+) serves as cofactor.

It localises to the cytoplasm. It catalyses the reaction tRNA(Lys) + L-lysine + ATP = L-lysyl-tRNA(Lys) + AMP + diphosphate. In Staphylococcus aureus (strain MRSA252), this protein is Lysine--tRNA ligase.